Here is an 87-residue protein sequence, read N- to C-terminus: UPF0250 protein CKO_02527 (87 aa).

Belongs to the UPF0250 family.

The polypeptide is UPF0250 protein CKO_02527 (Citrobacter koseri (strain ATCC BAA-895 / CDC 4225-83 / SGSC4696)).